Reading from the N-terminus, the 474-residue chain is Protein CyaE (474 aa).

The N-terminal stretch at 1-31 (MAAVQVRRRGRALALALWAGFALSVGGGVRA) is a signal peptide.

Belongs to the outer membrane factor (OMF) (TC 1.B.17) family.

The protein localises to the cell outer membrane. CyaE is necessary for transport of calmodulin-sensitive adenylate cyclase-hemolysin (cyclolysin). The protein is Protein CyaE (cyaE) of Bordetella pertussis (strain Tohama I / ATCC BAA-589 / NCTC 13251).